A 408-amino-acid chain; its full sequence is Acetate kinase (408 aa).

Asn7 contributes to the Mg(2+) binding site. Lys14 contributes to the ATP binding site. Arg91 lines the substrate pocket. The active-site Proton donor/acceptor is the Asp148. ATP is bound by residues 208–212 (HLGNG), 283–285 (DFR), and 331–335 (GIGEN). Glu384 contacts Mg(2+).

It belongs to the acetokinase family. Homodimer. Mg(2+) serves as cofactor. It depends on Mn(2+) as a cofactor.

Its subcellular location is the cytoplasm. It catalyses the reaction acetate + ATP = acetyl phosphate + ADP. It participates in metabolic intermediate biosynthesis; acetyl-CoA biosynthesis; acetyl-CoA from acetate: step 1/2. Its function is as follows. Catalyzes the formation of acetyl phosphate from acetate and ATP. Can also catalyze the reverse reaction. This is Acetate kinase from Methanosarcina mazei (Methanosarcina frisia).